Here is a 262-residue protein sequence, read N- to C-terminus: Tryptophan synthase alpha chain (262 aa).

Catalysis depends on proton acceptor residues E49 and D60.

It belongs to the TrpA family. Tetramer of two alpha and two beta chains.

The catalysed reaction is (1S,2R)-1-C-(indol-3-yl)glycerol 3-phosphate + L-serine = D-glyceraldehyde 3-phosphate + L-tryptophan + H2O. Its pathway is amino-acid biosynthesis; L-tryptophan biosynthesis; L-tryptophan from chorismate: step 5/5. Functionally, the alpha subunit is responsible for the aldol cleavage of indoleglycerol phosphate to indole and glyceraldehyde 3-phosphate. The polypeptide is Tryptophan synthase alpha chain (Thermoanaerobacter sp. (strain X514)).